The chain runs to 314 residues: Lipoyl synthase (314 aa).

7 residues coordinate [4Fe-4S] cluster: Cys40, Cys45, Cys51, Cys67, Cys71, Cys74, and Ser280. The region spanning 53–269 is the Radical SAM core domain; the sequence is SERKTATFMI…KNIALEKGFS (217 aa).

This sequence belongs to the radical SAM superfamily. Lipoyl synthase family. [4Fe-4S] cluster is required as a cofactor.

It is found in the cytoplasm. It carries out the reaction [[Fe-S] cluster scaffold protein carrying a second [4Fe-4S](2+) cluster] + N(6)-octanoyl-L-lysyl-[protein] + 2 oxidized [2Fe-2S]-[ferredoxin] + 2 S-adenosyl-L-methionine + 4 H(+) = [[Fe-S] cluster scaffold protein] + N(6)-[(R)-dihydrolipoyl]-L-lysyl-[protein] + 4 Fe(3+) + 2 hydrogen sulfide + 2 5'-deoxyadenosine + 2 L-methionine + 2 reduced [2Fe-2S]-[ferredoxin]. It participates in protein modification; protein lipoylation via endogenous pathway; protein N(6)-(lipoyl)lysine from octanoyl-[acyl-carrier-protein]. In terms of biological role, catalyzes the radical-mediated insertion of two sulfur atoms into the C-6 and C-8 positions of the octanoyl moiety bound to the lipoyl domains of lipoate-dependent enzymes, thereby converting the octanoylated domains into lipoylated derivatives. This chain is Lipoyl synthase, found in Oceanobacillus iheyensis (strain DSM 14371 / CIP 107618 / JCM 11309 / KCTC 3954 / HTE831).